A 495-amino-acid polypeptide reads, in one-letter code: MQAILALDQGTTSSRAIVYDAHGGVLGTAQQDFPQYFPQPGWVEHDPGEIWQSQYRVMIQAVERAGIPWSAIAGLGLTNQRETTLLWDRATGEPLHRAIVWQDRRTARLCDDLRRDGHERLFRERTGLLLDPYFSGTKLRWLLDHVPGARRRAEAGELAFGTVDSWLIWQLTGGRLHLTDASNASRTLLCNIHSGDWDPDLLAALDIPAALLPEIIDSSGVCGTTCCAGVPEGIPIAGVAGDQQAALYGQGCHEAGLAKCTYGTGAFLLMHTGERPIASANRLLTTVAWRIGGRTAYALEGSVFIAGAVVQWLRDGLGLIRSSDEIEALARQVPDTGGVYLVPAFAGLGAPHWDPDARGILVGMTRGTERPHIARAALESMAFQATEVIGAMEVDAGLAVKELRVDGGASANDLLMQFQADLLGAPVLRPADTEATAAGAAALAARAVGLNGARPSAEAAFTAFSPRLSRYEVEQRMATWQRAVRRAGGWARDDD.

Residue Thr11 participates in ADP binding. ATP-binding residues include Thr11, Thr12, and Ser13. Thr11 is a sn-glycerol 3-phosphate binding site. An ADP-binding site is contributed by Arg15. 4 residues coordinate sn-glycerol 3-phosphate: Arg81, Glu82, Tyr133, and Asp242. The glycerol site is built by Arg81, Glu82, Tyr133, Asp242, and Gln243. ADP is bound by residues Thr264 and Gly307. ATP-binding residues include Thr264, Gly307, Gln311, and Gly408. 2 residues coordinate ADP: Gly408 and Asn412.

Belongs to the FGGY kinase family.

It carries out the reaction glycerol + ATP = sn-glycerol 3-phosphate + ADP + H(+). The protein operates within polyol metabolism; glycerol degradation via glycerol kinase pathway; sn-glycerol 3-phosphate from glycerol: step 1/1. With respect to regulation, inhibited by fructose 1,6-bisphosphate (FBP). Its function is as follows. Key enzyme in the regulation of glycerol uptake and metabolism. Catalyzes the phosphorylation of glycerol to yield sn-glycerol 3-phosphate. This is Glycerol kinase from Alkalilimnicola ehrlichii (strain ATCC BAA-1101 / DSM 17681 / MLHE-1).